The primary structure comprises 296 residues: Homoserine kinase (296 aa).

ATP is bound at residue 92 to 102 (PQSRGLGSSAA).

It belongs to the GHMP kinase family. Homoserine kinase subfamily.

It is found in the cytoplasm. The enzyme catalyses L-homoserine + ATP = O-phospho-L-homoserine + ADP + H(+). The protein operates within amino-acid biosynthesis; L-threonine biosynthesis; L-threonine from L-aspartate: step 4/5. Catalyzes the ATP-dependent phosphorylation of L-homoserine to L-homoserine phosphate. The chain is Homoserine kinase from Cutibacterium acnes (strain DSM 16379 / KPA171202) (Propionibacterium acnes).